We begin with the raw amino-acid sequence, 70 residues long: Cytochrome c oxidase subunit 8B, mitochondrial (70 aa).

The transit peptide at 1–24 directs the protein to the mitochondrion; the sequence is MPRLPPILRLLQAPAKFTVVPKAH. Over 25–38 the chain is Mitochondrial matrix; that stretch reads VSAKPAKTPTSAVE. Residues 39–60 traverse the membrane as a helical segment; the sequence is QAVGISAIVVGFMVPAGWVLAH. Topologically, residues 61–70 are mitochondrial intermembrane; the sequence is LESYKKSSAA.

This sequence belongs to the cytochrome c oxidase VIII family. Component of the cytochrome c oxidase (complex IV, CIV), a multisubunit enzyme composed of 14 subunits. The complex is composed of a catalytic core of 3 subunits MT-CO1, MT-CO2 and MT-CO3, encoded in the mitochondrial DNA, and 11 supernumerary subunits COX4I, COX5A, COX5B, COX6A, COX6B, COX6C, COX7A, COX7B, COX7C, COX8 and NDUFA4, which are encoded in the nuclear genome. The complex exists as a monomer or a dimer and forms supercomplexes (SCs) in the inner mitochondrial membrane with NADH-ubiquinone oxidoreductase (complex I, CI) and ubiquinol-cytochrome c oxidoreductase (cytochrome b-c1 complex, complex III, CIII), resulting in different assemblies (supercomplex SCI(1)III(2)IV(1) and megacomplex MCI(2)III(2)IV(2)).

The protein localises to the mitochondrion inner membrane. It functions in the pathway energy metabolism; oxidative phosphorylation. Functionally, component of the cytochrome c oxidase, the last enzyme in the mitochondrial electron transport chain which drives oxidative phosphorylation. The respiratory chain contains 3 multisubunit complexes succinate dehydrogenase (complex II, CII), ubiquinol-cytochrome c oxidoreductase (cytochrome b-c1 complex, complex III, CIII) and cytochrome c oxidase (complex IV, CIV), that cooperate to transfer electrons derived from NADH and succinate to molecular oxygen, creating an electrochemical gradient over the inner membrane that drives transmembrane transport and the ATP synthase. Cytochrome c oxidase is the component of the respiratory chain that catalyzes the reduction of oxygen to water. Electrons originating from reduced cytochrome c in the intermembrane space (IMS) are transferred via the dinuclear copper A center (CU(A)) of subunit 2 and heme A of subunit 1 to the active site in subunit 1, a binuclear center (BNC) formed by heme A3 and copper B (CU(B)). The BNC reduces molecular oxygen to 2 water molecules using 4 electrons from cytochrome c in the IMS and 4 protons from the mitochondrial matrix. This chain is Cytochrome c oxidase subunit 8B, mitochondrial (Cox8b), found in Mus musculus (Mouse).